Reading from the N-terminus, the 2898-residue chain is Papilin (2898 aa).

An N-terminal signal peptide occupies residues 1–26; the sequence is MDLSRRLCSTALVAFIVLASIHDSQS. Residues 43-67 are disordered; it reads LPESSVTPGGEGNDPDEWTPWSSPS. The region spanning 57-111 is the TSP type-1 1 domain; the sequence is PDEWTPWSSPSDCSRTCGGGVSYQTRECLRRDDRGEAVCSGGSRRYFSCNTQDCP. 3 disulfide bridges follow: C69–C105, C73–C110, and C84–C95. 2 N-linked (GlcNAc...) asparagine glycosylation sites follow: N258 and N319. Positions 338 to 397 constitute a TSP type-1 2 domain; it reads DTHTWTHHQFNACSASCGGGSQSRKVTCNNRITLAEVNPSLCDQKSKPVEEQACGTEPCA. A glycan (N-linked (GlcNAc...) asparagine) is linked at N419. 4 consecutive TSP type-1 domains span residues 461 to 521, 522 to 575, 576 to 633, and 639 to 694; these read NCPK…TPCE, GVDW…KSPK, CEAQ…QDCE, and CPGE…EACT. 3 disulfides stabilise this stretch: C462–C504, C473–C515, and C477–C520. Residue N669 is glycosylated (N-linked (GlcNAc...) asparagine). Disordered regions lie at residues 699-1252 and 1323-1367; these read LPLT…CAKS and GEND…PDTK. Composition is skewed to acidic residues over residues 708–720 and 727–738; these read IEDD…EDGI and LSDDEKSEDVID. Over residues 768–788 the composition is skewed to polar residues; it reads STGTTFEGSGYDSESTTDSGI. The span at 801–879 shows a compositional bias: low complexity; the sequence is EASTDLSSST…ASASESTDVS (79 aa). 5 N-linked (GlcNAc...) asparagine glycosylation sites follow: N889, N914, N917, N950, and N1064. Residues 890 to 1053 are compositionally biased toward low complexity; the sequence is ASDSTPESST…SDNTDITTDG (164 aa). Polar residues predominate over residues 1064-1073; the sequence is NASTEGSTEG. Composition is skewed to low complexity over residues 1076 to 1091 and 1104 to 1215; these read EDTT…TEST and STVE…IWST. Residues 1237 to 1248 show a composition bias toward basic residues; that stretch reads SKPRKCKPKKST. Residues 1330 to 1351 show a composition bias toward low complexity; sequence PETTTVPPTTTTEETQPETTTE. N1489 and N1623 each carry an N-linked (GlcNAc...) asparagine glycan. 15 disulfide bridges follow: C1612-C1662, C1621-C1645, C1637-C1658, C1671-C1721, C1680-C1704, C1696-C1717, C1730-C1780, C1739-C1763, C1755-C1776, C1790-C1840, C1799-C1823, C1815-C1836, C1849-C1899, C1858-C1882, and C1874-C1895. BPTI/Kunitz inhibitor domains lie at 1612–1662, 1671–1721, 1730–1780, 1790–1840, and 1849–1899; these read CGLP…KDTC, CLLP…QGTC, CEQP…NYNC, CALP…EDHC, and CEIP…LARC. An N-linked (GlcNAc...) asparagine glycan is attached at N1750. The disordered stretch occupies residues 1902–1928; the sequence is KPEPTTTTPATRPQPSRQDVCDEEPAP. The segment covering 1905-1916 has biased composition (low complexity); it reads PTTTTPATRPQP. Intrachain disulfides connect C1922–C1972, C1931–C1955, and C1947–C1968. The BPTI/Kunitz inhibitor 6 domain occupies 1922–1972; that stretch reads CDEEPAPGECSTWVLKWHFDRKIGACRQFYYGNCGGNGNRFETENDCQQRC. The tract at residues 1972-2004 is disordered; the sequence is CLSQEPPAPTPPRAPAPTRQPDPAPTVAQCSQP. Residues 1977-1995 show a composition bias toward pro residues; it reads PPAPTPPRAPAPTRQPDPA. Cystine bridges form between C2001-C2051, C2010-C2034, C2026-C2047, C2071-C2121, C2080-C2104, C2096-C2117, C2128-C2178, C2137-C2161, C2153-C2174, C2194-C2244, C2203-C2227, C2219-C2240, C2253-C2303, C2262-C2286, C2278-C2299, C2318-C2371, C2327-C2354, and C2346-C2367. BPTI/Kunitz inhibitor domains follow at residues 2001 to 2051, 2071 to 2121, 2128 to 2178, 2194 to 2244, 2253 to 2303, and 2318 to 2371; these read CSQP…SARC, CFLA…QNEC, CALP…LNFC, CAEP…ERQC, CNEP…QTVC, and CLLP…TNQC. N-linked (GlcNAc...) asparagine glycosylation occurs at N2020. N2083 is a glycosylation site (N-linked (GlcNAc...) asparagine). A glycan (N-linked (GlcNAc...) asparagine) is linked at N2205. Residues 2452–2498 form the WAP domain; sequence DIYKPGECPALSANASGCARECYTDADCRGDNKCCSDGCGQLCVHPA. 3 N-linked (GlcNAc...) asparagine glycosylation sites follow: N2465, N2552, and N2625. Ig-like C2-type domains lie at 2523–2607, 2617–2697, and 2749–2840; these read PKEA…REVA, PAYI…RPVS, and PTVN…ANVS. Cysteines 2543 and 2592 form a disulfide. 2 disulfide bridges follow: C2640/C2687 and C2775/C2824. N-linked (GlcNAc...) asparagine glycosylation is found at N2784 and N2838. In terms of domain architecture, PLAC spans 2847–2886; the sequence is VSPECVDNPYFANCKLIVKGRYCSNPYYTQFCCRSCTLAG.

Belongs to the papilin family. As to quaternary structure, homooligomer; disulfide-linked. N-glycosylated. In terms of processing, sulfated. As to expression, during embryogenesis it first appears in the extracellular matrix during gastrulation and early mesoderm development at sites where basement membranes do not subsequently form. Later, migrating hemocytes prominently produce it together with other ECM components, in basement membranes that underlie epithelia and envelop muscles and emerging organs. At various life stages, it can be synthesized by other cells, such as those of the fat body, and it also occurs in a few, circumscribed regions of relatively amorphous ECM. Isoform E is specifically expressed in ECM of heart and proventriculus. Isoform C is a major component of transitory ECM deposit in the early embryo. Isoform F is a major component of the basement membrane during embryogenesis.

It is found in the secreted. It localises to the extracellular space. The protein resides in the extracellular matrix. Its subcellular location is the basement membrane. Essential extracellular matrix (ECM) protein that influences cell rearrangements. May act by modulating metalloproteinases action during organogenesis. Able to non-competitively inhibit procollagen N-proteinase, an ADAMTS metalloproteinase. The chain is Papilin (Ppn) from Drosophila melanogaster (Fruit fly).